A 149-amino-acid polypeptide reads, in one-letter code: Protein SprT-like (149 aa).

Residues 4–144 (TDYVKQVSLE…GLCRGKLLLV (141 aa)) form the SprT-like domain. Position 64 (H64) interacts with Zn(2+). Residue E65 is part of the active site. Residue H68 participates in Zn(2+) binding.

Belongs to the SprT family. Requires Zn(2+) as cofactor.

The protein resides in the cytoplasm. In Streptococcus pneumoniae serotype 4 (strain ATCC BAA-334 / TIGR4), this protein is Protein SprT-like.